We begin with the raw amino-acid sequence, 426 residues long: Serine--tRNA ligase (426 aa).

An L-serine-binding site is contributed by 233–235; it reads TAE. 264–266 is a binding site for ATP; it reads RSE. Position 287 (glutamate 287) interacts with L-serine. 351–354 lines the ATP pocket; the sequence is EISS. Serine 387 lines the L-serine pocket.

It belongs to the class-II aminoacyl-tRNA synthetase family. Type-1 seryl-tRNA synthetase subfamily. As to quaternary structure, homodimer. The tRNA molecule binds across the dimer.

It is found in the cytoplasm. The catalysed reaction is tRNA(Ser) + L-serine + ATP = L-seryl-tRNA(Ser) + AMP + diphosphate + H(+). It catalyses the reaction tRNA(Sec) + L-serine + ATP = L-seryl-tRNA(Sec) + AMP + diphosphate + H(+). The protein operates within aminoacyl-tRNA biosynthesis; selenocysteinyl-tRNA(Sec) biosynthesis; L-seryl-tRNA(Sec) from L-serine and tRNA(Sec): step 1/1. Functionally, catalyzes the attachment of serine to tRNA(Ser). Is also able to aminoacylate tRNA(Sec) with serine, to form the misacylated tRNA L-seryl-tRNA(Sec), which will be further converted into selenocysteinyl-tRNA(Sec). This chain is Serine--tRNA ligase, found in Pseudomonas putida (strain W619).